A 384-amino-acid chain; its full sequence is Signal peptide peptidase-like 3 (384 aa).

At 1 to 8 (MAEQTYSW) the chain is on the lumenal side. Residues 9–29 (AYSLVDSSQVSTFLISILLIV) form a helical membrane-spanning segment. The Cytoplasmic portion of the chain corresponds to 30 to 73 (YGSFRSLNMDFENQDKEKDSNSSSGSFNGNSTNNSIQTIDSTQA). The chain crosses the membrane as a helical span at residues 74-94 (LFLPIGASVSLLVMFFFFDSV). Q95 is a topological domain (lumenal). A helical transmembrane segment spans residues 96 to 116 (VVFTICTAVLATIAFAFLLLP). Over 117–138 (MCQYLTRPCSPQNKISFGCCGR) the chain is Cytoplasmic. Residues 139 to 159 (FTAAELLSFSLSVMLVLIWVL) form a helical membrane-spanning segment. Residues 160–164 (TGHWL) lie on the Lumenal side of the membrane. Residues 165–185 (LMDALAMGLCVAMIAFVRLPS) traverse the membrane as a helical segment. Over 186–190 (LKVSC) the chain is Cytoplasmic. A helical transmembrane segment spans residues 191–211 (LLLSGLLIYDVFWVFFSAYIF). D200 is a catalytic residue. Over 212–262 (NSNVMVKVATQPADNPLDVLSRKLHLGPNVGRDVPRLSLPGKLVFPSSTGS) the chain is Lumenal. A helical membrane pass occupies residues 263–283 (HFSMLGIGDIVMPGLLLCFVL). D271 is a catalytic residue. The Cytoplasmic segment spans residues 284 to 311 (RYDNYKKQASGDSCGAPGPANISGRMQK). A helical membrane pass occupies residues 312–332 (VSYFHCTLIGYFVGLLTATVA). Residues 333-339 (SRIHRAA) lie on the Lumenal side of the membrane. A helical transmembrane segment spans residues 340–360 (QPALLYLVPFTLLPLLTMAYL). The PAL signature appears at 341–343 (PAL). Residues 361 to 384 (KGDLRRMWSEPFHSKSSSSRFLEV) lie on the Cytoplasmic side of the membrane.

The protein belongs to the peptidase A22B family. Monomer. Homodimer. Interacts with STIM1 (via transmembrane region and SOAR/CAD domain); the interaction promotes the binding of STIM1 to ORAI1. Not glycosylated.

Its subcellular location is the endoplasmic reticulum membrane. It localises to the golgi apparatus. It is found in the membrane. Its activity is regulated as follows. Its proteolytic activity is blocked by a signal peptide peptidase (SPP) inhibitor, (ZLL)2-ketone (ZLL) or a gamma-secretase inhibitor, LY411,575. Its function is as follows. Intramembrane-cleaving aspartic protease (I-CLiP) that cleaves type II membrane protein substrates in or close to their luminal transmembrane domain boundaries. Acts like a sheddase by mediating the proteolytic release and secretion of active site-containing ectodomains of glycan-modifiying glycosidase and glycosyltransferase enzymes such as MGAT5, B4GAT1 and B4GALT1. Plays a role in the regulation of cellular glycosylation processes. Required to link T-cell antigen receptor (TCR) and calcineurin-NFAT signaling cascades in lymphocytes by promoting the association of STIM1 and ORAI1 during store-operated calcium entry (SOCE) in a protease-independent manner. The protein is Signal peptide peptidase-like 3 of Mus musculus (Mouse).